The chain runs to 368 residues: Histidinol-phosphate aminotransferase (368 aa).

Lys228 is modified (N6-(pyridoxal phosphate)lysine).

This sequence belongs to the class-II pyridoxal-phosphate-dependent aminotransferase family. Histidinol-phosphate aminotransferase subfamily. It depends on pyridoxal 5'-phosphate as a cofactor.

It catalyses the reaction L-histidinol phosphate + 2-oxoglutarate = 3-(imidazol-4-yl)-2-oxopropyl phosphate + L-glutamate. It functions in the pathway amino-acid biosynthesis; L-histidine biosynthesis; L-histidine from 5-phospho-alpha-D-ribose 1-diphosphate: step 7/9. The sequence is that of Histidinol-phosphate aminotransferase from Methanosarcina mazei (strain ATCC BAA-159 / DSM 3647 / Goe1 / Go1 / JCM 11833 / OCM 88) (Methanosarcina frisia).